We begin with the raw amino-acid sequence, 233 residues long: Large ribosomal subunit protein uL1 (233 aa).

This sequence belongs to the universal ribosomal protein uL1 family. Part of the 50S ribosomal subunit.

Binds directly to 23S rRNA. The L1 stalk is quite mobile in the ribosome, and is involved in E site tRNA release. Functionally, protein L1 is also a translational repressor protein, it controls the translation of the L11 operon by binding to its mRNA. This is Large ribosomal subunit protein uL1 from Geobacillus thermodenitrificans (strain NG80-2).